A 48-amino-acid polypeptide reads, in one-letter code: Protein PsbN (48 aa).

The chain crosses the membrane as a helical span at residues 12-34 (LLIAMVTITFGLTGYGLYTAFGP).

This sequence belongs to the PsbN family.

The protein resides in the cellular thylakoid membrane. In terms of biological role, may play a role in photosystem I and II biogenesis. The polypeptide is Protein PsbN (Prochlorococcus marinus (strain MIT 9313)).